The chain runs to 349 residues: Quinolinate synthase (349 aa).

Iminosuccinate is bound by residues His-52 and Ser-69. Cys-114 provides a ligand contact to [4Fe-4S] cluster. Residues 140-142 (YVN) and Ser-157 each bind iminosuccinate. Cys-201 contributes to the [4Fe-4S] cluster binding site. Iminosuccinate is bound by residues 227–229 (HPE) and Thr-255. [4Fe-4S] cluster is bound at residue Cys-300.

This sequence belongs to the quinolinate synthase family. Type 2 subfamily. [4Fe-4S] cluster is required as a cofactor.

It is found in the cytoplasm. The catalysed reaction is iminosuccinate + dihydroxyacetone phosphate = quinolinate + phosphate + 2 H2O + H(+). It functions in the pathway cofactor biosynthesis; NAD(+) biosynthesis; quinolinate from iminoaspartate: step 1/1. In terms of biological role, catalyzes the condensation of iminoaspartate with dihydroxyacetone phosphate to form quinolinate. In Mycobacterium bovis (strain BCG / Tokyo 172 / ATCC 35737 / TMC 1019), this protein is Quinolinate synthase.